The following is a 510-amino-acid chain: Pentatricopeptide repeat-containing protein At1g71060, mitochondrial (510 aa).

The N-terminal 14 residues, 1–14, are a transit peptide targeting the mitochondrion; the sequence is MVFSRFFRVTGVNL. PPR repeat units lie at residues 127–157, 161–195, 196–230, 231–265, 266–300, 301–335, 336–370, 371–401, 403–437, and 438–472; these read TTSNYNALIESLGKIKQFKLIWSLVDDMKAK, SKETFALISRRYARARKVKEAIGAFHKMEEFGFKM, ESSDFNRMLDTLSKSRNVGDAQKVFDKMKKKRFEP, DIKSYTILLEGWGQELNLLRVDEVNREMKDEGFEP, DVVAYGIIINAHCKAKKYEEAIRFFNEMEQRNCKP, SPHIFCSLINGLGSEKKLNDALEFFERSKSSGFPL, EAPTYNALVGAYCWSQRMEDAYKTVDEMRLKGVGP, NARTYDIILHHLIRMQRSKEAYEVYQTMSCE, TVSTYEIMVRMFCNKERLDMAIKIWDEMKGKGVLP, and GMHMFSSLITALCHENKLDEACEYFNEMLDVGIRP.

This sequence belongs to the PPR family. P subfamily.

The protein localises to the mitochondrion. This is Pentatricopeptide repeat-containing protein At1g71060, mitochondrial from Arabidopsis thaliana (Mouse-ear cress).